The primary structure comprises 458 residues: tRNA modification GTPase MnmE (458 aa).

The (6S)-5-formyl-5,6,7,8-tetrahydrofolate site is built by arginine 32, glutamate 89, and lysine 128. Residues 224–381 form the TrmE-type G domain; that stretch reads GVRVVLAGRP…LCQRLKECAG (158 aa). Asparagine 234 contacts K(+). GTP-binding positions include 234–239, 253–259, and 278–281; these read NVGKSS, TDVPGTT, and DTAG. Mg(2+) is bound at residue serine 238. Threonine 253, valine 255, and threonine 258 together coordinate K(+). Threonine 259 contributes to the Mg(2+) binding site. Position 458 (lysine 458) interacts with (6S)-5-formyl-5,6,7,8-tetrahydrofolate.

This sequence belongs to the TRAFAC class TrmE-Era-EngA-EngB-Septin-like GTPase superfamily. TrmE GTPase family. As to quaternary structure, homodimer. Heterotetramer of two MnmE and two MnmG subunits. K(+) serves as cofactor.

It localises to the cytoplasm. Its function is as follows. Exhibits a very high intrinsic GTPase hydrolysis rate. Involved in the addition of a carboxymethylaminomethyl (cmnm) group at the wobble position (U34) of certain tRNAs, forming tRNA-cmnm(5)s(2)U34. In Nitrosococcus oceani (strain ATCC 19707 / BCRC 17464 / JCM 30415 / NCIMB 11848 / C-107), this protein is tRNA modification GTPase MnmE.